A 217-amino-acid chain; its full sequence is 3,4-dihydroxy-2-butanone 4-phosphate synthase (217 aa).

Residues 37–38 (RE), Asp42, 150–154 (RRGHT), and Glu174 contribute to the D-ribulose 5-phosphate site. Glu38 serves as a coordination point for Mg(2+). Mg(2+) is bound at residue His153.

This sequence belongs to the DHBP synthase family. Homodimer. Mg(2+) is required as a cofactor. Mn(2+) serves as cofactor.

It catalyses the reaction D-ribulose 5-phosphate = (2S)-2-hydroxy-3-oxobutyl phosphate + formate + H(+). Its pathway is cofactor biosynthesis; riboflavin biosynthesis; 2-hydroxy-3-oxobutyl phosphate from D-ribulose 5-phosphate: step 1/1. Catalyzes the conversion of D-ribulose 5-phosphate to formate and 3,4-dihydroxy-2-butanone 4-phosphate. This Serratia proteamaculans (strain 568) protein is 3,4-dihydroxy-2-butanone 4-phosphate synthase.